The primary structure comprises 360 residues: MTKDRVAQWIRPEIQRLSAYRVADAADLIKLDAMENPYTWSPELIEAWLERLRQVSVNRYPDPQARSLKLRLRQYLALPEDMEMILGNGSDELIQMVLLAVAGPGRSVVAPEPTFVMYRQIAALLGLQYQGVALREDFSLDLPAMLQVIRERVPAVVFIAYPNNPTGNLFSAEELQAIIEASPGLVIVDEAYSVFAGETFMPRLEDYDHLLVMRTLSKIGLAGLRLGMLMGNPAWIKELEKVRLPYNINQLTQVSAEFALEQPGGLDEQARLICKARAQLQRALQQLPGIQVYPSDANFILFRTPPHQAEAIFTAIKERGVLIKNLSGQGGLLTDCLRVTVGTADENHAFLKALKAGRKN.

The residue at position 218 (Lys218) is an N6-(pyridoxal phosphate)lysine.

Belongs to the class-II pyridoxal-phosphate-dependent aminotransferase family. Histidinol-phosphate aminotransferase subfamily. Homodimer. The cofactor is pyridoxal 5'-phosphate.

It catalyses the reaction L-histidinol phosphate + 2-oxoglutarate = 3-(imidazol-4-yl)-2-oxopropyl phosphate + L-glutamate. The protein operates within amino-acid biosynthesis; L-histidine biosynthesis; L-histidine from 5-phospho-alpha-D-ribose 1-diphosphate: step 7/9. This chain is Histidinol-phosphate aminotransferase 2, found in Nitrosococcus oceani (strain ATCC 19707 / BCRC 17464 / JCM 30415 / NCIMB 11848 / C-107).